Consider the following 629-residue polypeptide: Ionotropic receptor 75a (629 aa).

The Extracellular portion of the chain corresponds to 1 to 335; sequence MQLVQLANFV…GDVFLQPFSP (335 aa). N-linked (GlcNAc...) asparagine glycosylation is found at asparagine 61, asparagine 112, asparagine 126, asparagine 144, asparagine 166, and asparagine 232. A helical transmembrane segment spans residues 336–356; it reads LVWYLFGGVLSLIGVLLWITF. At 357–374 the chain is on the cytoplasmic side; sequence YMECKRMQKRWRLDYLPS. A helical transmembrane segment spans residues 375–395; it reads LLSTFLISFGAACIQSSSLIP. The Extracellular segment spans residues 396–402; sequence RSAGGRL. Residues 403–423 form a helical membrane-spanning segment; it reads IYFALFLISFIMYNYYTSVVV. At 424–592 the chain is on the cytoplasmic side; it reads SSLLSSPVKS…NFVITVGMEY (169 aa). Residues 593–613 form a helical membrane-spanning segment; sequence VAPLLLMLICADILVVVILLV. At 614–629 the chain is on the extracellular side; that stretch reads ELAWKRFFTRHLTFHP.

The protein belongs to the glutamate-gated ion channel (TC 1.A.10.1) family. In terms of tissue distribution, expressed in acetic-acid-sensing neurons in the antennal coeloconic 2 (ac2) and antennal coeloconic 3 (ac3) sensilla class of sensory hairs (at protein level).

The protein localises to the cell membrane. It localises to the cell projection. It is found in the dendrite. Its function is as follows. Odorant receptor for acetic and propionic acid. Functions as part of an olfactory receptor complex including the ionotropic receptor coreceptor Ir8a. This Drosophila melanogaster (Fruit fly) protein is Ionotropic receptor 75a.